Reading from the N-terminus, the 292-residue chain is tRNA pseudouridine synthase B (292 aa).

Residue aspartate 38 is the Nucleophile of the active site.

This sequence belongs to the pseudouridine synthase TruB family. Type 1 subfamily.

It carries out the reaction uridine(55) in tRNA = pseudouridine(55) in tRNA. Functionally, responsible for synthesis of pseudouridine from uracil-55 in the psi GC loop of transfer RNAs. In Streptococcus gordonii (strain Challis / ATCC 35105 / BCRC 15272 / CH1 / DL1 / V288), this protein is tRNA pseudouridine synthase B.